The primary structure comprises 193 residues: Probable type II restriction enzyme HpyAORF263P (193 aa).

It belongs to the BsaWI type II restriction endonuclease family.

It carries out the reaction Endonucleolytic cleavage of DNA to give specific double-stranded fragments with terminal 5'-phosphates.. Its function is as follows. A P subtype probable restriction enzyme that recognizes the double-stranded sequence CCGG; the cleavage site is unknown. The polypeptide is Probable type II restriction enzyme HpyAORF263P (Helicobacter pylori (strain ATCC 700392 / 26695) (Campylobacter pylori)).